The primary structure comprises 264 residues: tRNA (guanine-N(1)-)-methyltransferase (264 aa).

S-adenosyl-L-methionine is bound by residues G125 and 145–150 (LGDFVL).

The protein belongs to the RNA methyltransferase TrmD family. As to quaternary structure, homodimer.

Its subcellular location is the cytoplasm. It carries out the reaction guanosine(37) in tRNA + S-adenosyl-L-methionine = N(1)-methylguanosine(37) in tRNA + S-adenosyl-L-homocysteine + H(+). Its function is as follows. Specifically methylates guanosine-37 in various tRNAs. The chain is tRNA (guanine-N(1)-)-methyltransferase from Burkholderia lata (strain ATCC 17760 / DSM 23089 / LMG 22485 / NCIMB 9086 / R18194 / 383).